Reading from the N-terminus, the 341-residue chain is Ribosomal RNA small subunit methyltransferase H (341 aa).

Residues Gly47–Tyr49, Asp64, Phe91, Asp109, and Gln116 contribute to the S-adenosyl-L-methionine site.

It belongs to the methyltransferase superfamily. RsmH family.

The protein resides in the cytoplasm. It catalyses the reaction cytidine(1402) in 16S rRNA + S-adenosyl-L-methionine = N(4)-methylcytidine(1402) in 16S rRNA + S-adenosyl-L-homocysteine + H(+). In terms of biological role, specifically methylates the N4 position of cytidine in position 1402 (C1402) of 16S rRNA. In Rhizobium rhizogenes (strain K84 / ATCC BAA-868) (Agrobacterium radiobacter), this protein is Ribosomal RNA small subunit methyltransferase H.